The sequence spans 155 residues: Small ribosomal subunit protein bS6 (155 aa).

The disordered stretch occupies residues 94 to 155 (VKQEGPLPTP…TPELEEQVKS (62 aa)). The segment covering 103 to 112 (PRSSNKSSNQ) has biased composition (polar residues). A compositionally biased stretch (basic and acidic residues) spans 113 to 141 (AEKKENENIDSANKSEPKADETDNKKKIT).

Belongs to the bacterial ribosomal protein bS6 family.

Binds together with bS18 to 16S ribosomal RNA. This is Small ribosomal subunit protein bS6 from Prochlorococcus marinus (strain MIT 9515).